A 446-amino-acid chain; its full sequence is D(3) dopamine receptor (446 aa).

Residues 1 to 32 (MAPLSQISSHINSTCGAENSTGVNRARPHAYY) are Extracellular-facing. N-linked (GlcNAc...) asparagine glycosylation is found at N12 and N19. Residues 33-55 (ALSYCALILAIIFGNGLVCAAVL) form a helical membrane-spanning segment. The Cytoplasmic portion of the chain corresponds to 56–65 (RERALQTTTN). Residues 66–88 (YLVVSLAVADLLVATLVMPWVVY) traverse the membrane as a helical segment. The Extracellular segment spans residues 89-104 (LEVTGGVWNFSRICCD). N97 is a glycosylation site (N-linked (GlcNAc...) asparagine). A disulfide bridge links C103 with C181. A helical membrane pass occupies residues 105–126 (VFVTLDVMMCTASILNLCAISI). At 127–149 (DRYTAVVMPVHYQHGTGQSSCRR) the chain is on the cytoplasmic side. A helical membrane pass occupies residues 150 to 170 (VALMITAVWVLAFAVSCPLLF). Over 171–187 (GFNTTGDPSICSISNPD) the chain is Extracellular. The N-linked (GlcNAc...) asparagine glycan is linked to N173. A helical membrane pass occupies residues 188–209 (FVIYSSVVSFYVPFGVTVLVYA). Topologically, residues 210–375 (RIYMVLRQRR…VPLREKKATQ (166 aa)) are cytoplasmic. Residues 376 to 397 (MVVIVLGAFIVCWLPFFLTHVL) traverse the membrane as a helical segment. Residues 398 to 412 (NTHCQACHVSPELYR) lie on the Extracellular side of the membrane. C401 and C404 are joined by a disulfide. The chain crosses the membrane as a helical span at residues 413–432 (ATTWLGYVNSALNPVIYTTF). Residues 433–446 (NIEFRKAFLKILSC) are Cytoplasmic-facing.

The protein belongs to the G-protein coupled receptor 1 family. As to quaternary structure, interacts with CLIC6. Interacts with GRK4. Interacts with PALM. Interacts with FLNA (via filamin repeat 21); increases PKA-mediated phosphorylation of FLNA. Post-translationally, phosphorylated by GRK4. Palmitoylated.

Its subcellular location is the cell membrane. Dopamine receptor whose activity is mediated by G proteins which inhibit adenylyl cyclase. Promotes cell proliferation. This Mus musculus (Mouse) protein is D(3) dopamine receptor (Drd3).